Reading from the N-terminus, the 261-residue chain is Small ribosomal subunit protein uS2 (261 aa).

Residues Gly222–Glu261 form a disordered region. Composition is skewed to acidic residues over residues Gly230–Ser239 and Glu248–Glu261.

It belongs to the universal ribosomal protein uS2 family.

The sequence is that of Small ribosomal subunit protein uS2 from Campylobacter lari (strain RM2100 / D67 / ATCC BAA-1060).